Here is a 395-residue protein sequence, read N- to C-terminus: Cytochrome b561 and DOMON domain-containing protein At5g47530 (395 aa).

The N-terminal stretch at 1 to 24 is a signal peptide; the sequence is MAISSNLLLCLSLFIFIITKSALA. Residues 47–162 enclose the DOMON domain; that stretch reads LDSFLHYTYD…GIINTVWQDG (116 aa). Residues 176-371 form the Cytochrome b561 domain; the sequence is GNNVRSVSTL…LEGFTWYVVI (196 aa). A run of 2 helical transmembrane segments spans residues 210–230 and 242–262; these read IHGILNGVSWGIMMPIGAIIA and AWFYLHVFCQSSAYIIGVAGW. His211, His247, and His280 together coordinate heme b. The chain crosses the membrane as a helical span at residues 282–302; that stretch reads AVGIALFCLATIQVFAMFLRP. His316 contributes to the heme b binding site. 2 helical membrane-spanning segments follow: residues 318–338 and 351–371; these read TVGYSVIILAVVNVFKGLDIL and IIVVLGIVAVVLEGFTWYVVI.

Heme b serves as cofactor.

Its subcellular location is the membrane. May act as a catecholamine-responsive trans-membrane electron transporter. The polypeptide is Cytochrome b561 and DOMON domain-containing protein At5g47530 (Arabidopsis thaliana (Mouse-ear cress)).